We begin with the raw amino-acid sequence, 158 residues long: MRIGHGFDVHKFGGEGPLIIGGVRIPYPQGLLAHSDGDVALHTATDALLGAAALGDIGKLFPDTDSAFKGADSRALLREAWRRIAAKGYRLGNLDITLIAQVPKMALHIPQMRVNIAEDLGCHMDDVNVKATTTEQLGFTGRGEGIACEAVALLVRTS.

D8 and H10 together coordinate a divalent metal cation. 4-CDP-2-C-methyl-D-erythritol 2-phosphate-binding positions include 8–10 (DVH) and 34–35 (HS). H42 contacts a divalent metal cation. 4-CDP-2-C-methyl-D-erythritol 2-phosphate is bound by residues 56 to 58 (DIG), 61 to 65 (FPDTD), 100 to 106 (AQVPKMA), 132 to 135 (TTTE), F139, and R142.

The protein belongs to the IspF family. As to quaternary structure, homotrimer. A divalent metal cation serves as cofactor.

It catalyses the reaction 4-CDP-2-C-methyl-D-erythritol 2-phosphate = 2-C-methyl-D-erythritol 2,4-cyclic diphosphate + CMP. Its pathway is isoprenoid biosynthesis; isopentenyl diphosphate biosynthesis via DXP pathway; isopentenyl diphosphate from 1-deoxy-D-xylulose 5-phosphate: step 4/6. Functionally, involved in the biosynthesis of isopentenyl diphosphate (IPP) and dimethylallyl diphosphate (DMAPP), two major building blocks of isoprenoid compounds. Catalyzes the conversion of 4-diphosphocytidyl-2-C-methyl-D-erythritol 2-phosphate (CDP-ME2P) to 2-C-methyl-D-erythritol 2,4-cyclodiphosphate (ME-CPP) with a corresponding release of cytidine 5-monophosphate (CMP). This chain is 2-C-methyl-D-erythritol 2,4-cyclodiphosphate synthase, found in Sodalis glossinidius (strain morsitans).